Consider the following 187-residue polypeptide: Protein ECM23 (187 aa).

Disordered stretches follow at residues 106–127 (GKKS…LPNG) and 167–187 (KKIR…FKNK). The GATA-type zinc-finger motif lies at 126–180 (NGQPKECATCGDTWTSQWRSGPNGNVELCSRCGIAYRKKMEKKIRSQQSSDDGTK).

Involved in morphogenesis. May be involved in cell wall organization and biogenesis. This is Protein ECM23 (ECM23) from Saccharomyces cerevisiae (strain ATCC 204508 / S288c) (Baker's yeast).